An 86-amino-acid chain; its full sequence is Cardiotoxin homolog TA-ctx-like (86 aa).

A signal peptide spans 1–21 (MKTLLLTLVVLTIACLDLGYT). Intrachain disulfides connect Cys24–Cys45, Cys38–Cys62, Cys66–Cys78, and Cys79–Cys84.

It belongs to the three-finger toxin family. Short-chain subfamily. Orphan group IX sub-subfamily. As to expression, expressed by the venom gland.

It is found in the secreted. The sequence is that of Cardiotoxin homolog TA-ctx-like from Bungarus multicinctus (Many-banded krait).